The chain runs to 255 residues: Ribonuclease HII (255 aa).

An RNase H type-2 domain is found at 72-255 (RLIAGVDEVG…KTFAPVQSFR (184 aa)). 3 residues coordinate a divalent metal cation: Asp-78, Glu-79, and Asp-170.

It belongs to the RNase HII family. Requires Mn(2+) as cofactor. Mg(2+) is required as a cofactor.

It localises to the cytoplasm. It catalyses the reaction Endonucleolytic cleavage to 5'-phosphomonoester.. Endonuclease that specifically degrades the RNA of RNA-DNA hybrids. This chain is Ribonuclease HII (rnhB), found in Bacillus subtilis (strain 168).